A 195-amino-acid polypeptide reads, in one-letter code: MSFAEKITGLLARPNQQDPVGPEQPWYLKYGSRLLGIVAAFFAILFGLWNVISILTLNVGCLVAGIIQMVAGFVVMLLEAPCCFVCIEKVNDIADKVDSKPMYFRAGLYCAMAVPPIFMCFGLASLFGSGLIFATGVIYGMMALGKKASAEDMRAAAQQSYAGNATPQTTNDRAGIVNNAQPFSFTGAVGTDSNV.

The next 3 helical transmembrane spans lie at Leu34–Ile54, Ile66–Glu88, and Ile117–Val137.

The protein belongs to the calcium channel flower family. In terms of assembly, homomultimer. Associates with the dally/ magu complex.

It localises to the cell membrane. The protein resides in the cytoplasmic vesicle. Its subcellular location is the secretory vesicle. The protein localises to the synaptic vesicle membrane. It is found in the presynaptic cell membrane. It localises to the endosome. Channel activity is inhibited by La(3+), which reduces Ca(2+) influx and thus inhibits it's function in promoting activity-dependent bulk endocytosis (ADBE) in response to high stimuli. Its function is as follows. Transmembrane protein which mediates synaptic endocytosis, fitness-based cell culling, neuronal culling, morphogen gradient scaling, and calcium transport. Regulates synaptic endocytosis and hence couples exo- with endocytosis. Controls two major modes of synaptic vesicle (SV) endocytosis in the synaptic boutons of neuromuscular junctions (NMJs); Ca(2+) channel-independent Clathrin-mediated endocytosis (CME) in response to mild stimulation, and Ca(2+) channel-dependent activity-dependent bulk endocytosis (ADBE) in response to strong stimulation. Functions in ADBE and subsequent SV reformation from bulk endosomes by initiating Ca(2+) channel-dependent phosphatidylinositol 4,5-bisphosphate (PtdIns(4,5)P2) compartmentalization in synaptic boutons. There it acts at the periactive zone to provide the low Ca(2+) levels required to initiate Calcineurin activation and upregulate PtdIns(4,5)P2. Conversely PtdIns(4,5)P2 enhances fwe Ca(2+) channel-activity, establishing a positive feedback loop that induces PtdIns(4,5)P2 microdomain at the periactive zone. These microdomains trigger bulk membrane invagination (i.e. ADBE) by triggering actin polymerization while also promoting localization of fwe to bulk endosomes, thereby removing the ADBE trigger to reduce endocytosis and prevent excess membrane uptake. PtdIns(4,5)P2 then promotes SV reformation from the bulk endosomes, to coordinate ADBE and subsequent SV reformation. Different combinations of the flower isoforms at the cell membrane are also required for the identification and elimination of suboptimal or supernumerary cells during development, regeneration, and adulthood. Required for the recognition and elimination of unfit cells in the developing wing during cell competition. In the developing pupal retina, mediates the elimination of unwanted postmitotic neurons, including supernumerary photoreceptor neurons that form at the periphery of the retina and are contained within incomplete ommatidia units. Also required for efficient elimination and replacement of old neurons by newly generated neurons during regeneration in the adult brain following mechanical injury. Downstream of the flower fitness fingerprints, cells identified as unwanted or unfit are eliminated via apoptosis through the expression of ahuizotl (azot). However, the cells marked for elimination by the flower isoforms only undergo apoptosis if additional thresholds are met; (1) their neighboring fit/healthy cells express different levels of the fwe isoforms, and (2) the levels of the protective signal SPARC expressed by the loser or unwanted cells are unable to inhibit caspase activation. These additional thresholds for flower-mediated apoptosis, allows useful cells to recover from transient and limited stress before they are unnecessarily eliminated. Functions with dally and magu in a mechanism of scaling, which utilises apoptosis to ensure that the dpp morphogen gradient, which mediates organ growth, remains proportional to the size of the growing wing. In this mechanism, fwe represses dally- and Magu-dependent activity in expanding the gradient, and dally/Magu inhibits fwe-dependent apoptosis to keep cell death rate low. When the levels of these different proteins are optimally regulated the gradient correctly scales with organ growth but when this fails, fwe-mediated apoptosis is activated to trim the developing tissue to match the correct size of the gradient. This is Calcium channel flower from Drosophila ananassae (Fruit fly).